The chain runs to 237 residues: uncharacterized protein (237 aa).

21-28 (GCDGSGKS) is an ATP binding site.

The protein to E.coli YghR and YghT.

This is an uncharacterized protein from Escherichia coli (strain K12).